The sequence spans 651 residues: DNA mismatch repair protein MutL (651 aa).

It belongs to the DNA mismatch repair MutL/HexB family.

This protein is involved in the repair of mismatches in DNA. It is required for dam-dependent methyl-directed DNA mismatch repair. May act as a 'molecular matchmaker', a protein that promotes the formation of a stable complex between two or more DNA-binding proteins in an ATP-dependent manner without itself being part of a final effector complex. This is DNA mismatch repair protein MutL from Streptococcus mutans serotype c (strain ATCC 700610 / UA159).